Here is an 834-residue protein sequence, read N- to C-terminus: ATP-dependent 6-phosphofructokinase (834 aa).

An N-terminal catalytic PFK domain 1 region spans residues 1-426; it reads MTTTSKIIND…FYEIFIACSN (426 aa). Residues Gly-62, 123-124, and 153-156 each bind ATP; these read RS and GDGS. Asp-154 contributes to the Mg(2+) binding site. Substrate is bound by residues 199 to 201, Arg-236, 243 to 245, Glu-299, Arg-326, and 332 to 335; these read SID, MGR, and HVQR. The active-site Proton acceptor is Asp-201. The segment at 427 to 437 is interdomain linker; the sequence is LHRRKVESKGM. The C-terminal regulatory PFK domain 2 stretch occupies residues 438-834; that stretch reads GVLILHSGGP…DPNVNPQFTL (397 aa). Residues Arg-507, 566 to 570, Arg-603, 610 to 612, Glu-666, Arg-692, 698 to 701, and Arg-764 contribute to the beta-D-fructose 2,6-bisphosphate site; these read TIANN, MGA, and HLQQ. Residues 799-834 form a disordered region; it reads SNLSEQDRPIKKSDISSPTSYSQKTFDPNVNPQFTL. The span at 803–812 shows a compositional bias: basic and acidic residues; that stretch reads EQDRPIKKSD. Polar residues predominate over residues 813-834; it reads ISSPTSYSQKTFDPNVNPQFTL.

The protein belongs to the phosphofructokinase type A (PFKA) family. ATP-dependent PFK group I subfamily. Eukaryotic two domain clade 'E' sub-subfamily. In terms of assembly, homotetramer. It depends on Mg(2+) as a cofactor. In terms of processing, the N-terminus is blocked.

It is found in the cytoplasm. It carries out the reaction beta-D-fructose 6-phosphate + ATP = beta-D-fructose 1,6-bisphosphate + ADP + H(+). Its pathway is carbohydrate degradation; glycolysis; D-glyceraldehyde 3-phosphate and glycerone phosphate from D-glucose: step 3/4. Its activity is regulated as follows. Allosterically activated by ADP, AMP, or fructose 2,6-bisphosphate, and allosterically inhibited by ATP or citrate. Functionally, catalyzes the phosphorylation of D-fructose 6-phosphate to fructose 1,6-bisphosphate by ATP, the first committing step of glycolysis. The polypeptide is ATP-dependent 6-phosphofructokinase (pfkA) (Dictyostelium discoideum (Social amoeba)).